Reading from the N-terminus, the 381-residue chain is L-lactate dehydrogenase (381 aa).

Residues 1–380 (MIISASTDYR…NRDSLAVSER (380 aa)) form the FMN hydroxy acid dehydrogenase domain. Residue Y24 coordinates substrate. FMN is bound by residues S106 and Q127. Residue Y129 participates in substrate binding. Position 155 (T155) interacts with FMN. Substrate is bound at residue R164. Position 251 (K251) interacts with FMN. The Proton acceptor role is filled by H275. R278 provides a ligand contact to substrate. Position 306 to 330 (306 to 330 (DSGIRTGLDVVRMIALGADSVLLGR)) interacts with FMN.

This sequence belongs to the FMN-dependent alpha-hydroxy acid dehydrogenase family. It depends on FMN as a cofactor.

It is found in the cell inner membrane. The catalysed reaction is (S)-lactate + A = pyruvate + AH2. Functionally, catalyzes the conversion of L-lactate to pyruvate. Is coupled to the respiratory chain. In Yersinia pseudotuberculosis serotype O:1b (strain IP 31758), this protein is L-lactate dehydrogenase.